We begin with the raw amino-acid sequence, 430 residues long: MDRIRITGGNKLNGVIPISGAKNAALPLMIASLLTSDTLTLENVPHLADVEQLIRILGNHGVDISVNGRRESQGEAYSRTVHFTCRTIVDTTAPYELVSKMRASFWVIGPLLAREGRARVSLPGGCAIGTRPVDLFIEGLQALGATMEIDGGYINASAPKGGLIGAVYTFPKVSVGATHVMLMAASLARGTTVIHNAAREPEVVDLAHCLIAMGAKIEGAGTSTITIEGVTSLSGARHRVLPDRIETGTYAMAVAMAGGDVVLEGTRASLLDNALDTLRLAGVTISDTDTGLRVVRNGNGIQPVDIVTEPFPGFPTDLQAQFMALMTRSQGVSHITETIFENRFMHVQELARLGAKISLSGQMARIEGVTRLKGAPVMATDLRASVSLVIAGLVAEGETMVSRVYHLDRGFERLEEKLTRCGALVERVSD.

22-23 (KN) lines the phosphoenolpyruvate pocket. Residue Arg-102 coordinates UDP-N-acetyl-alpha-D-glucosamine. Catalysis depends on Cys-126, which acts as the Proton donor. Cys-126 carries the post-translational modification 2-(S-cysteinyl)pyruvic acid O-phosphothioketal. UDP-N-acetyl-alpha-D-glucosamine-binding positions include 131–135 (RPVDL), 172–175 (KVSV), Asp-317, and Ile-339.

This sequence belongs to the EPSP synthase family. MurA subfamily.

It localises to the cytoplasm. It catalyses the reaction phosphoenolpyruvate + UDP-N-acetyl-alpha-D-glucosamine = UDP-N-acetyl-3-O-(1-carboxyvinyl)-alpha-D-glucosamine + phosphate. It participates in cell wall biogenesis; peptidoglycan biosynthesis. Cell wall formation. Adds enolpyruvyl to UDP-N-acetylglucosamine. This Agrobacterium fabrum (strain C58 / ATCC 33970) (Agrobacterium tumefaciens (strain C58)) protein is UDP-N-acetylglucosamine 1-carboxyvinyltransferase.